The chain runs to 72 residues: Translation initiation factor IF-1 (72 aa).

The region spanning 1 to 72 (MAKEDSIEME…SKGRIVYRAR (72 aa)) is the S1-like domain.

The protein belongs to the IF-1 family. In terms of assembly, component of the 30S ribosomal translation pre-initiation complex which assembles on the 30S ribosome in the order IF-2 and IF-3, IF-1 and N-formylmethionyl-tRNA(fMet); mRNA recruitment can occur at any time during PIC assembly.

Its subcellular location is the cytoplasm. Functionally, one of the essential components for the initiation of protein synthesis. Stabilizes the binding of IF-2 and IF-3 on the 30S subunit to which N-formylmethionyl-tRNA(fMet) subsequently binds. Helps modulate mRNA selection, yielding the 30S pre-initiation complex (PIC). Upon addition of the 50S ribosomal subunit IF-1, IF-2 and IF-3 are released leaving the mature 70S translation initiation complex. In Nitrosococcus oceani (strain ATCC 19707 / BCRC 17464 / JCM 30415 / NCIMB 11848 / C-107), this protein is Translation initiation factor IF-1.